A 322-amino-acid polypeptide reads, in one-letter code: 4-hydroxy-3-methylbut-2-enyl diphosphate reductase (322 aa).

Cysteine 12 lines the [4Fe-4S] cluster pocket. (2E)-4-hydroxy-3-methylbut-2-enyl diphosphate-binding residues include histidine 43 and histidine 81. 2 residues coordinate dimethylallyl diphosphate: histidine 43 and histidine 81. Isopentenyl diphosphate is bound by residues histidine 43 and histidine 81. Cysteine 103 provides a ligand contact to [4Fe-4S] cluster. (2E)-4-hydroxy-3-methylbut-2-enyl diphosphate is bound at residue histidine 131. Histidine 131 contacts dimethylallyl diphosphate. Histidine 131 provides a ligand contact to isopentenyl diphosphate. The active-site Proton donor is glutamate 133. Threonine 172 lines the (2E)-4-hydroxy-3-methylbut-2-enyl diphosphate pocket. Position 200 (cysteine 200) interacts with [4Fe-4S] cluster. Residues serine 228, asparagine 230, and serine 273 each coordinate (2E)-4-hydroxy-3-methylbut-2-enyl diphosphate. Dimethylallyl diphosphate contacts are provided by serine 228, asparagine 230, and serine 273. Positions 228, 230, and 273 each coordinate isopentenyl diphosphate.

It belongs to the IspH family. [4Fe-4S] cluster is required as a cofactor.

It carries out the reaction isopentenyl diphosphate + 2 oxidized [2Fe-2S]-[ferredoxin] + H2O = (2E)-4-hydroxy-3-methylbut-2-enyl diphosphate + 2 reduced [2Fe-2S]-[ferredoxin] + 2 H(+). The catalysed reaction is dimethylallyl diphosphate + 2 oxidized [2Fe-2S]-[ferredoxin] + H2O = (2E)-4-hydroxy-3-methylbut-2-enyl diphosphate + 2 reduced [2Fe-2S]-[ferredoxin] + 2 H(+). The protein operates within isoprenoid biosynthesis; dimethylallyl diphosphate biosynthesis; dimethylallyl diphosphate from (2E)-4-hydroxy-3-methylbutenyl diphosphate: step 1/1. It functions in the pathway isoprenoid biosynthesis; isopentenyl diphosphate biosynthesis via DXP pathway; isopentenyl diphosphate from 1-deoxy-D-xylulose 5-phosphate: step 6/6. Catalyzes the conversion of 1-hydroxy-2-methyl-2-(E)-butenyl 4-diphosphate (HMBPP) into a mixture of isopentenyl diphosphate (IPP) and dimethylallyl diphosphate (DMAPP). Acts in the terminal step of the DOXP/MEP pathway for isoprenoid precursor biosynthesis. This is 4-hydroxy-3-methylbut-2-enyl diphosphate reductase from Macrococcus caseolyticus (strain JCSC5402) (Macrococcoides caseolyticum).